Reading from the N-terminus, the 118-residue chain is Large ribosomal subunit protein bL20 (118 aa).

Belongs to the bacterial ribosomal protein bL20 family.

Functionally, binds directly to 23S ribosomal RNA and is necessary for the in vitro assembly process of the 50S ribosomal subunit. It is not involved in the protein synthesizing functions of that subunit. This is Large ribosomal subunit protein bL20 from Methylibium petroleiphilum (strain ATCC BAA-1232 / LMG 22953 / PM1).